A 466-amino-acid chain; its full sequence is Rhodanese-like domain-containing protein 4, chloroplastic (466 aa).

The transit peptide at 1–15 directs the protein to the chloroplast; sequence MEALKTATFSPMSVL. The segment at 1–35 is disordered; it reads MEALKTATFSPMSVLSEKRSEPRKPFSLPNLFPPK. The N-terminal 54 residues, 16-69, are a transit peptide targeting the thylakoid; it reads SEKRSEPRKPFSLPNLFPPKSQRPISQESFLKRFNGGLALLTSVLSSATAPAKS. Residues 103-123 traverse the membrane as a helical segment; sequence PLVIAGGVAALAVPFVLSQVL. The Rhodanese domain maps to 144 to 250; that stretch reads TDDNAQLLDI…WLNSSLPWIE (107 aa). A helical transmembrane segment spans residues 277–297; the sequence is VSVALGVAAAAGLSVFAFTEI. Positions 373–384 are enriched in low complexity; the sequence is EAESATATTTTV. Disordered regions lie at residues 373-392 and 426-466; these read EAES…PEPE and AQVI…PSQP. Residues 455–466 are compositionally biased toward pro residues; it reads LKPPSSPMPSQP.

Component of high molecular weight thylakoid LFNRs-containing protein complexes containing LIR1, LFNR1, LFNR2, TIC62 and TROL proteins. Expressed in leaves and stems, and at lower levels in flowers and siliques (at protein level).

It is found in the plastid. The protein resides in the chloroplast envelope. The protein localises to the chloroplast thylakoid membrane. Its function is as follows. Rhodanese domain-containing protein required for anchoring ferredoxin--NADP reductase to the thylakoid membranes and sustaining efficient linear electron flow (LEF). This chain is Rhodanese-like domain-containing protein 4, chloroplastic, found in Arabidopsis thaliana (Mouse-ear cress).